Consider the following 378-residue polypeptide: MTEYLFTSESVSEGHPDKIADQISDALLDEILKQDLKARVACETYVKTGMVLIGGEITTTAWVDVEEITRKTINDIGYVNSDAGFDANSCAVLSAIGKQSPDINQGINRFDPLKQGAGDQGIIFGYATNETEFFMPAPITYAHLLMQKQSELRKKNILPWLRPDAKSQVTFKYNNGNIIAIDTVVLSTQHQENITQKYLKEAVMDEIIKPVLPDKWLTKNTKFFINPTGRFVIGGPMGDCGVTGRKIIVDTYGGMSRHGGGAFSGKDPSKVDRSAAYAARYVAKNIVASGLAARCEIQLSYAIGIAEPISIMIDTFNTGKISNSALISLVRSIFDLRPYGLIKMLNLLQPIYLKTAVYGHFGRKEFPWENLDKVNELS.

An ATP-binding site is contributed by histidine 15. Residue aspartate 17 participates in Mg(2+) binding. Glutamate 43 is a binding site for K(+). The L-methionine site is built by glutamate 56 and glutamine 99. Residues 99 to 109 are flexible loop; that stretch reads QSPDINQGINR. ATP is bound by residues 164–166, 230–231, aspartate 239, 245–246, alanine 262, and lysine 266; these read DAK, RF, and RK. Aspartate 239 serves as a coordination point for L-methionine. Lysine 270 is a binding site for L-methionine.

This sequence belongs to the AdoMet synthase family. Homotetramer; dimer of dimers. It depends on Mg(2+) as a cofactor. K(+) serves as cofactor.

The protein resides in the cytoplasm. It catalyses the reaction L-methionine + ATP + H2O = S-adenosyl-L-methionine + phosphate + diphosphate. It participates in amino-acid biosynthesis; S-adenosyl-L-methionine biosynthesis; S-adenosyl-L-methionine from L-methionine: step 1/1. Catalyzes the formation of S-adenosylmethionine (AdoMet) from methionine and ATP. The overall synthetic reaction is composed of two sequential steps, AdoMet formation and the subsequent tripolyphosphate hydrolysis which occurs prior to release of AdoMet from the enzyme. The polypeptide is S-adenosylmethionine synthase (Buchnera aphidicola subsp. Acyrthosiphon pisum (strain 5A)).